Here is a 328-residue protein sequence, read N- to C-terminus: MQRLVAWDAACLPIQPPAFKSMEVANFYYEADCLAALNKLHPRAAGGRSMTELTVGDHERAIDFSPYLDPLAASQQPAQPPPPAAAAGGNFEPACSSGGQDFLSDLFAEDYKGSGGGKKPDYTYISLTRHGHPCGSQSHKPGVLPGCFPPQIVETKVEPVFETLDSCKGPRKEEGGAGPGPGGMSSPYGSTVRSYLGYQSVPSGSSGNLSTSSSSSPPGTPNPSESSKSAAGAGGYSGPPAGKNKPKKCVDKHSDEYKLRRERNNIAVRKSRDKAKMRNLETQHKVLELTAENERLQKKVEQLSRELSTLRNLFKQLPEPLLASSPRC.

R3 carries the post-translational modification Asymmetric dimethylarginine; by CARM1. K39 carries the post-translational modification N6-methylated lysine. The tract at residues 165–274 (DSCKGPRKEE…NIAVRKSRDK (110 aa)) is disordered. Over residues 200-231 (SVPSGSSGNLSTSSSSSPPGTPNPSESSKSAA) the composition is skewed to low complexity. The residue at position 220 (T220) is a Phosphothreonine; by RPS6KA1, CDK2 and MAPK. The span at 248–264 (KCVDKHSDEYKLRRERN) shows a compositional bias: basic and acidic residues. The region spanning 254 to 317 (SDEYKLRRER…STLRNLFKQL (64 aa)) is the bZIP domain. The basic motif stretch occupies residues 258–278 (KLRRERNNIAVRKSRDKAKMR). Positions 280 to 287 (LETQHKVL) are leucine-zipper.

This sequence belongs to the bZIP family. C/EBP subfamily. In terms of assembly, binds DNA as a dimer. Interacts (not methylated) with MED23, MED26, SMARCA2, SMARCB1 and SMARCC1. In terms of processing, methylated. Methylation at Arg-3 by CARM1 and at Lys-39 by EHMT2, inhibit transactivation activity. Methylation is probably inhibited by phosphorylation at Thr-220. In terms of tissue distribution, specifically expressed in myelomoncytic cells.

The protein resides in the nucleus. Important transcriptional activator regulating the expression of genes involved in immune and inflammatory responses. Binds to regulatory regions of several acute-phase and cytokines genes and probably plays a role in the regulation of acute-phase reaction, inflammation and hemopoiesis. The consensus recognition site is 5'-T[TG]NNGNAA[TG]-3'. Functions in brown adipose tissue (BAT) differentiation. Regulates the transcriptional induction of peroxisome proliferator-activated receptor gamma (PPARG). Binds to the MGF and MIM-1 promoters and activates the transcription of these genes. In terms of biological role, important transcription factor regulating the expression of genes involved in immune and inflammatory responses. Also plays a significant role in adipogenesis, as well as in the gluconeogenic pathway, liver regeneration, and hematopoiesis. The consensus recognition site is 5'-T[TG]NNGNAA[TG]-3'. Its functional capacity is governed by protein interactions and post-translational protein modifications. The protein is CCAAT/enhancer-binding protein beta (CEBPB) of Gallus gallus (Chicken).